The sequence spans 703 residues: UvrABC system protein B (703 aa).

The region spanning Thr33–Arg190 is the Helicase ATP-binding domain. Residue Gly46 to Thr53 participates in ATP binding. Positions Tyr99–Ile122 match the Beta-hairpin motif. One can recognise a Helicase C-terminal domain in the interval Gln436–Ile589. In terms of domain architecture, UVR spans Ala659–Glu694.

The protein belongs to the UvrB family. In terms of assembly, forms a heterotetramer with UvrA during the search for lesions. Interacts with UvrC in an incision complex.

It is found in the cytoplasm. Functionally, the UvrABC repair system catalyzes the recognition and processing of DNA lesions. A damage recognition complex composed of 2 UvrA and 2 UvrB subunits scans DNA for abnormalities. Upon binding of the UvrA(2)B(2) complex to a putative damaged site, the DNA wraps around one UvrB monomer. DNA wrap is dependent on ATP binding by UvrB and probably causes local melting of the DNA helix, facilitating insertion of UvrB beta-hairpin between the DNA strands. Then UvrB probes one DNA strand for the presence of a lesion. If a lesion is found the UvrA subunits dissociate and the UvrB-DNA preincision complex is formed. This complex is subsequently bound by UvrC and the second UvrB is released. If no lesion is found, the DNA wraps around the other UvrB subunit that will check the other stand for damage. The sequence is that of UvrABC system protein B from Bifidobacterium longum subsp. infantis (strain ATCC 15697 / DSM 20088 / JCM 1222 / NCTC 11817 / S12).